Here is a 554-residue protein sequence, read N- to C-terminus: Undecaprenyl phosphate-alpha-4-amino-4-deoxy-L-arabinose arabinosyl transferase (554 aa).

The next 11 helical transmembrane spans lie at 4 to 24 (LKGS…LLPI), 87 to 107 (FGSI…ATLL), 115 to 135 (FLAA…SYAV), 178 to 198 (FMTK…PIVI), 206 to 226 (LIIF…PWAL), 262 to 282 (YLPI…AALL), 293 to 313 (ELFF…VAKG), 315 to 335 (LPTY…AYAT), 352 to 372 (INLI…MGWV), 384 to 404 (QKVI…FATM), and 410 to 430 (HWHW…YLIP).

It belongs to the glycosyltransferase 83 family.

The protein localises to the cell inner membrane. It carries out the reaction 4-amino-4-deoxy-alpha-L-arabinopyranosyl di-trans,octa-cis-undecaprenyl phosphate + lipid IVA = lipid IIA + di-trans,octa-cis-undecaprenyl phosphate.. It participates in lipopolysaccharide metabolism; 4-amino-4-deoxy-beta-L-arabinose-lipid A biosynthesis. Catalyzes the transfer of the L-Ara4N moiety of the glycolipid undecaprenyl phosphate-alpha-L-Ara4N to lipid A. The modified arabinose is attached to lipid A and is required for resistance to polymyxin and cationic antimicrobial peptides. The protein is Undecaprenyl phosphate-alpha-4-amino-4-deoxy-L-arabinose arabinosyl transferase of Yersinia enterocolitica serotype O:8 / biotype 1B (strain NCTC 13174 / 8081).